A 142-amino-acid polypeptide reads, in one-letter code: ATP synthase epsilon chain (142 aa).

Belongs to the ATPase epsilon chain family. F-type ATPases have 2 components, CF(1) - the catalytic core - and CF(0) - the membrane proton channel. CF(1) has five subunits: alpha(3), beta(3), gamma(1), delta(1), epsilon(1). CF(0) has three main subunits: a, b and c.

Its subcellular location is the cell inner membrane. In terms of biological role, produces ATP from ADP in the presence of a proton gradient across the membrane. The chain is ATP synthase epsilon chain from Shewanella piezotolerans (strain WP3 / JCM 13877).